An 881-amino-acid chain; its full sequence is DNA replication helicase (881 aa).

90–97 (GNAGSGKS) provides a ligand contact to ATP.

The protein belongs to the herpesviridae helicase family. As to quaternary structure, associates with the primase and the primase-associated factor to form the helicase-primase complex.

It localises to the host nucleus. Functionally, component of the helicase/primase complex. Unwinds the DNA at the replication forks and generates single-stranded DNA for both leading and lagging strand synthesis. The primase synthesizes short RNA primers on the lagging strand that the polymerase elongates using dNTPs. Possesses helicase-like motifs and therefore may act as the helicase subunit of the complex. This is DNA replication helicase from Homo sapiens (Human).